Reading from the N-terminus, the 119-residue chain is MKFFKRYNIDQKTLDEFKKYYVLLHGPFPNDMYDFEEETNTSLDEFYEFFALITGSLNYIIEDKKIPRYQREMLKKTFYEHYPHFRNYKSDILKYQELSECLEFHEKIRILINKLITGG.

Immunity protein component of a toxin-immunity protein module, which functions as a cellular contact-dependent growth inhibition (CDI) system. Neutralizes the tRNase activity of cognate toxin WapA upon expression in E.coli. Does not inhibit WapA from other strains of B.subtilis. The WapA C-terminus cannot be expressed on its own in E.coli, however it can be cloned in the presence of its cognate immunity protein gene. Cell contact is probably necessary for growth inhibition. This chain is Immunity protein WapI (wapI), found in Bacillus subtilis subsp. natto (strain BEST195).